We begin with the raw amino-acid sequence, 666 residues long: Galactocerebrosidase (666 aa).

Positions 1 to 22 are cleaved as a signal peptide; that stretch reads MIYKLYFAIALCFSLCFDLCIA. Thr91 contributes to the substrate binding site. Asn125 is a glycosylation site (N-linked (GlcNAc...) asparagine). Residues Trp133 and Asn179 each coordinate substrate. Glu180 (proton donor/acceptor) is an active-site residue. The active-site Nucleophile is the Glu256. A disulfide bond links Cys269 and Cys376. N-linked (GlcNAc...) asparagine glycosylation is present at Asn361. Residue Arg378 participates in substrate binding. Residues Asn385, Asn390, Asn500, and Asn540 are each glycosylated (N-linked (GlcNAc...) asparagine).

It belongs to the glycosyl hydrolase 59 family.

The protein localises to the lysosome. It carries out the reaction a beta-D-galactosyl-(1&lt;-&gt;1')-N-acylsphing-4-enine + H2O = an N-acylsphing-4-enine + D-galactose. It catalyses the reaction beta-D-galactosyl-(1&lt;-&gt;1)-sphing-4-enine + H2O = sphing-4-enine + D-galactose. The catalysed reaction is a D-galactosylceramide + H2O = an N-acyl-sphingoid base + D-galactose. In terms of biological role, hydrolyzes the galactose ester bonds of glycolipids such as galactosylceramide and galactosylsphingosine. This chain is Galactocerebrosidase, found in Salmo salar (Atlantic salmon).